Consider the following 214-residue polypeptide: Putative germin-like protein 9-2 (214 aa).

A signal peptide spans 1–25 (MALSYYSLLLLLLAVWAPALTLVMA). Residues asparagine 44 and asparagine 60 are each glycosylated (N-linked (GlcNAc...) asparagine). The Cupin type-1 domain occupies 56–202 (RKVFNTSSAP…SFKTDVPTIL (147 aa)). Histidine 104, histidine 106, glutamate 111, and histidine 150 together coordinate Mn(2+).

This sequence belongs to the germin family. Oligomer (believed to be a pentamer but probably hexamer).

It is found in the secreted. The protein resides in the extracellular space. It localises to the apoplast. In terms of biological role, may play a role in plant defense. Probably has no oxalate oxidase activity even if the active site is conserved. This is Putative germin-like protein 9-2 from Oryza sativa subsp. japonica (Rice).